We begin with the raw amino-acid sequence, 93 residues long: Small ribosomal subunit protein uS19 (93 aa).

This sequence belongs to the universal ribosomal protein uS19 family.

In terms of biological role, protein S19 forms a complex with S13 that binds strongly to the 16S ribosomal RNA. The sequence is that of Small ribosomal subunit protein uS19 from Clostridioides difficile (strain 630) (Peptoclostridium difficile).